The chain runs to 631 residues: Glutathione S-transferase C-terminal domain-containing protein (631 aa).

One can recognise a GST C-terminal domain in the interval L128–A330. 2 disordered regions span residues H188–A233 and T345–R373. The span at A211–T224 shows a compositional bias: basic and acidic residues. Residue S231 is modified to Phosphoserine.

Belongs to the GSTCD family.

Its subcellular location is the cytoplasm. This is Glutathione S-transferase C-terminal domain-containing protein (GSTCD) from Bos taurus (Bovine).